Reading from the N-terminus, the 745-residue chain is Cysteine protease atg4 (745 aa).

3 stretches are compositionally biased toward low complexity: residues 29 to 42, 52 to 64, and 194 to 215; these read QQSY…APQQ, SPTS…SSST, and NNNS…NNNN. 2 disordered regions span residues 29-68 and 192-215; these read QQSY…AMGN and FQNN…NNNN. Catalysis depends on Cys-262, which acts as the Nucleophile. Disordered stretches follow at residues 344–363 and 439–480; these read LNRG…KEEE and QNNN…NGYN. Residues 439 to 477 show a composition bias toward low complexity; the sequence is QNNNKNNNNNNPTTTTTTTTTATSSNNNNNQSPPSRVPN. Catalysis depends on residues Asp-562 and His-564. A disordered region spans residues 686–745; that stretch reads HIPYNPNNNQNNNQNNNNNNNKNNNNNTNQQQTPNYPPKLNTYQPDFSSDGEIDDFTMVG. Over residues 688–719 the composition is skewed to low complexity; sequence PYNPNNNQNNNQNNNNNNNKNNNNNTNQQQTP. Residues 734-745 are compositionally biased toward acidic residues; that stretch reads SDGEIDDFTMVG.

Belongs to the peptidase C54 family.

Its subcellular location is the cytoplasm. The catalysed reaction is [protein]-C-terminal L-amino acid-glycyl-phosphatidylethanolamide + H2O = [protein]-C-terminal L-amino acid-glycine + a 1,2-diacyl-sn-glycero-3-phosphoethanolamine. Its function is as follows. Cysteine protease that plays a key role in autophagy by mediating both proteolytic activation and delipidation of ATG8 family proteins. The protease activity is required for proteolytic activation of ATG8 family proteins: cleaves the C-terminal amino acid of ATG8 proteins to reveal a C-terminal glycine. Exposure of the glycine at the C-terminus is essential for ATG8 proteins conjugation to phosphatidylethanolamine (PE) and insertion to membranes, which is necessary for autophagy. In addition to the protease activity, also mediates delipidation of PE-conjugated ATG8 proteins. The chain is Cysteine protease atg4 (atg4-1) from Dictyostelium discoideum (Social amoeba).